The following is a 739-amino-acid chain: Catalase-peroxidase (739 aa).

An N-terminal signal peptide occupies residues 1 to 23; sequence MLKKIVTALGMSGMLLAANSAIA. Positions 100–221 form a cross-link, tryptophyl-tyrosyl-methioninium (Trp-Tyr) (with M-247); that stretch reads WHDAGTYRLA…YAATQMGLIY (122 aa). Histidine 101 (proton acceptor) is an active-site residue. A cross-link (tryptophyl-tyrosyl-methioninium (Tyr-Met) (with W-100)) is located at residues 221-247; that stretch reads YVNPEGPDGKPDIKGAASEIRQAFRAM. Heme b is bound at residue histidine 262.

Belongs to the peroxidase family. Peroxidase/catalase subfamily. Homodimer or homotetramer. Heme b serves as cofactor. In terms of processing, formation of the three residue Trp-Tyr-Met cross-link is important for the catalase, but not the peroxidase activity of the enzyme.

It catalyses the reaction H2O2 + AH2 = A + 2 H2O. The enzyme catalyses 2 H2O2 = O2 + 2 H2O. Bifunctional enzyme with both catalase and broad-spectrum peroxidase activity. The sequence is that of Catalase-peroxidase from Francisella philomiragia subsp. philomiragia (strain ATCC 25017 / CCUG 19701 / FSC 153 / O#319-036).